The sequence spans 745 residues: METSVSEIQVETKDEKGPVAASPQKERQERKTATLCFKRRKKANKTKPKAGSRTAEETKKHTPEAGGSGQRQPAGAWASIKGLVTHRKRSEPAKKQKPPEAEVQPEDGALPKKKAKSRLKFPCLRFSRGAKRSRHSKLTEDSGYVRVQGEADDLEIKAQTQPDDQAIQAGSTQGLQEGVLVRDGKKSQESHISNSVTSGENVIAIELELENKSSAIQMGTPELEKETKVITEKPSVQTQRASLLESSAAGSPRSVTSAAPPSPATTHQHSLEEPSNGIRESAPSGKDDRRKTAAEEKKSGETALGQAEEAAVGQADKRALSQAGEATAGHPEEATVIQAESQAKEGKLSQAEETTVAQAKETVLSQAKEGELSQAKKATVGQAEEATIDHTEKVTVDQAEETTVGQAEEATVGQAGEAILSQAKEATVVGQAEEATVDRAEEATVGQAEEATVGHTEKVTVDQAEEATVGQAEEATVGQAEEATVDWAEKPTVGQAEEATVGQAEEATVGHTEKVTVDQAEEATVGQAEEATVGHTEKVTVDHAEEATVGQAEEATVGQAEKVTVDHAEEATVGQAEEATVGQAEKVTVDHAEEATVGQAEEATVGQAEKVTVDQAEEPTVDQAEEAISSHAPDLKENGIDTEKPRSEESKRMEPIAIIITDTEISEFDVKKSKNVPKQFLISMENEQVGVFANDSDFEGRTSEQYETLLIETASSLVKNAIELSVEQLVNEMVSEDNQINTLFQ.

The interval 1–121 (METSVSEIQV…KKKAKSRLKF (121 aa)) is disordered. The segment at 1-164 (METSVSEIQV…EIKAQTQPDD (164 aa)) is essential to the intracellular anchoring function. Phosphoserine occurs at positions 4 and 22. Cysteine 36 carries the S-palmitoyl cysteine lipid modification. The span at 37–50 (FKRRKKANKTKPKA) shows a compositional bias: basic residues. Basic and acidic residues-rich tracts occupy residues 54-63 (TAEETKKHTP) and 90-100 (SEPAKKQKPPE). An AKAP CaM-binding motif is present at residues 74–94 (AGAWASIKGLVTHRKRSEPAK). The S-palmitoyl cysteine moiety is linked to residue cysteine 123. Positions 162–175 (PDDQAIQAGSTQGL) are enriched in polar residues. Disordered regions lie at residues 162–195 (PDDQ…ISNS) and 215–392 (AIQM…DHTE). Basic and acidic residues-rich tracts occupy residues 180–189 (LVRDGKKSQE) and 222–231 (ELEKETKVIT). The segment covering 234 to 268 (PSVQTQRASLLESSAAGSPRSVTSAAPPSPATTHQ) has biased composition (polar residues). The span at 285–300 (GKDDRRKTAAEEKKSG) shows a compositional bias: basic and acidic residues. The stretch at 304–312 (LGQAEEAAV) is one 1; approximate repeat. A 28 X 8 AA repeats of V-G-Q-A-E-E-A-T region spans residues 304-628 (LGQAEEAAVG…PTVDQAEEAI (325 aa)). The stretch at 320–327 (LSQAGEAT) is one 2; approximate repeat. Residues 328–335 (AGHPEEAT) form a 3; approximate repeat. Residues 348–355 (LSQAEETT) form a 4; approximate repeat. The 5; approximate repeat unit spans residues 356 to 363 (VAQAKETV). One copy of the 6; approximate repeat lies at 364-395 (LSQAKEGELSQAKKATVGQAEEATIDHTEKVT). A 7; approximate repeat occupies 420–436 (LSQAKEATVVGQAEEAT). An 8; approximate repeat occupies 445–452 (VGQAEEAT). A run of 5 repeats spans residues 461-468 (VDQAEEAT), 469-476 (VGQAEEAT), 477-484 (VGQAEEAT), 485-492 (VDWAEKPT), and 493-500 (VGQAEEAT). Positions 466 to 560 (EATVGQAEEA…QAEEATVGQA (95 aa)) are disordered. Residues 501-508 (VGQAEEAT) form a 14; approximate repeat. A 15; approximate repeat occupies 517-524 (VDQAEEAT). 4 tandem repeats follow at residues 525 to 532 (VGQAEEAT), 533 to 540 (VGHTEKVT), 541 to 548 (VDHAEEAT), and 549 to 556 (VGQAEEAT). Over residues 535 to 546 (HTEKVTVDHAEE) the composition is skewed to basic and acidic residues. A 20; approximate repeat occupies 557–564 (VGQAEKVT). Repeat 21 spans residues 565 to 572 (VDHAEEAT). The 22; approximate repeat unit spans residues 573–580 (VGQAEEAT). The 23; approximate repeat unit spans residues 581-588 (VGQAEKVT). A 24; approximate repeat occupies 589-596 (VDHAEEAT). Repeat unit 25 spans residues 597 to 604 (VGQAEEAT). A 26; approximate repeat occupies 605–612 (VGQAEKVT). A 27; approximate repeat occupies 613–620 (VDQAEEPT). The segment at 617-651 (EEPTVDQAEEAISSHAPDLKENGIDTEKPRSEESK) is disordered. The stretch at 621-628 (VDQAEEAI) is one 28; approximate repeat. The span at 633 to 651 (PDLKENGIDTEKPRSEESK) shows a compositional bias: basic and acidic residues. An RII-beta subunit binding domain region spans residues 706–727 (YETLLIETASSLVKNAIELSVE). The tethers NFATC2 to CRAC channels stretch occupies residues 728–745 (QLVNEMVSEDNQINTLFQ).

Binding protein for dimer of the RII-beta regulatory subunit of cAMP-dependent protein kinase (PKA) and also for the protein kinase C (PKC) and the phosphatase calcineurin (PP2B). Each enzyme is inhibited when bound to the anchoring protein. Also binds the beta2-adrenergic receptor. Part of a complex containing AKAP5, ADCY5, ADCY6 and PDE4C. Interacts with ADCY8, and enhances its phosphorylation at lipid rafts. Interacts with ORAI1 (isoform alpha) (via N-terminus) upon store depletion and in response to LTC4. Does not interact with ORAI2 and ORAI3 paralogs. Interacts (via leucine zipper domain) with NFATC2/NFAT1. Interacts with calmodulin; the interaction is calcium-independent. Interacts with KCNQ2; the interaction may help KCNQ2 channel complex to retain calcium-bound calmodulin. Interacts with KCNK2; the channel is recruited to postsynaptic microdomains by AKAP5 where it can integrate neurotransmitter receptor signals. Part of a complex composed of AKAP5 and ADRB2. In terms of processing, palmitoylated. Palmitoylation at Cys-36 and Cys-123 play a key role in the targeting of AKAP5 to lipid rafts. Palmitoylation by ZDHHC2 is required for AKAP5 function in LTP-stimulated recycling endosome exocytosis.

The protein localises to the postsynaptic recycling endosome membrane. Its subcellular location is the cell projection. The protein resides in the dendrite. It is found in the postsynaptic cell membrane. Its function is as follows. Multivalent scaffold protein that anchors the cAMP-dependent protein kinase/PKA to cytoskeletal and/or organelle-associated proteins, targeting the signal carried by cAMP to specific intracellular effectors. Association with the beta2-adrenergic receptor (beta2-AR) not only regulates beta2-AR signaling pathway, but also the activation by PKA by switching off the beta2-AR signaling cascade. Plays a role in long term synaptic potentiation by regulating protein trafficking from the dendritic recycling endosomes to the plasma membrane and controlling both structural and functional plasticity at excitatory synapses. In hippocampal pyramidal neurons, recruits KCNK2/TREK-1 channel at postsynaptic dense bodies microdomains and converts it to a leak channel no longer sensitive to stimulation by arachidonic acid, acidic pH or mechanical stress, nor inhibited by Gq-coupled receptors but still under the negative control of Gs-coupled receptors. Associates with ORAI1 pore-forming subunit of CRAC channels in Ca(2+) signaling microdomains where it recruits NFATC2/NFAT1 and couples store-operated Ca(2+) influx to calmodulin and calcineurin signaling and activation of NFAT-dependent transcriptional responses. This chain is A-kinase anchor protein 5 (Akap5), found in Mus musculus (Mouse).